We begin with the raw amino-acid sequence, 341 residues long: NADH-quinone oxidoreductase subunit H (341 aa).

A run of 8 helical transmembrane segments spans residues Leu-6–Tyr-26, Leu-76–Ile-96, Val-118–Gly-138, Val-157–Ser-177, Leu-198–Val-218, Phe-252–Gly-272, Phe-278–Trp-298, and Gly-313–Val-333.

Belongs to the complex I subunit 1 family. In terms of assembly, NDH-1 is composed of 14 different subunits. Subunits NuoA, H, J, K, L, M, N constitute the membrane sector of the complex.

It localises to the cell membrane. It catalyses the reaction a quinone + NADH + 5 H(+)(in) = a quinol + NAD(+) + 4 H(+)(out). Functionally, NDH-1 shuttles electrons from NADH, via FMN and iron-sulfur (Fe-S) centers, to quinones in the respiratory chain. The immediate electron acceptor for the enzyme in this species is believed to be ubiquinone. Couples the redox reaction to proton translocation (for every two electrons transferred, four hydrogen ions are translocated across the cytoplasmic membrane), and thus conserves the redox energy in a proton gradient. This subunit may bind ubiquinone. The protein is NADH-quinone oxidoreductase subunit H of Thermomicrobium roseum (strain ATCC 27502 / DSM 5159 / P-2).